Consider the following 353-residue polypeptide: Nucleotide-binding protein sce5766 (353 aa).

27–34 (GLSGAGKS) is an ATP binding site. GTP is bound at residue 76–79 (DVRV). Residues 310–353 (SGVPSGVGEGMAGAPGVDLRLAQPGATPSEPRPASDTSVTGGER) are disordered. The span at 344-353 (SDTSVTGGER) shows a compositional bias: polar residues.

This sequence belongs to the RapZ-like family.

In terms of biological role, displays ATPase and GTPase activities. In Sorangium cellulosum (strain So ce56) (Polyangium cellulosum (strain So ce56)), this protein is Nucleotide-binding protein sce5766.